Reading from the N-terminus, the 75-residue chain is Large ribosomal subunit protein bL31 (75 aa).

Belongs to the bacterial ribosomal protein bL31 family. Type A subfamily. In terms of assembly, part of the 50S ribosomal subunit.

Its function is as follows. Binds the 23S rRNA. In Chlorobium phaeovibrioides (strain DSM 265 / 1930) (Prosthecochloris vibrioformis (strain DSM 265)), this protein is Large ribosomal subunit protein bL31.